The chain runs to 334 residues: Phosphoribosylformylglycinamidine cyclo-ligase (334 aa).

This sequence belongs to the AIR synthase family.

Its subcellular location is the cytoplasm. It catalyses the reaction 2-formamido-N(1)-(5-O-phospho-beta-D-ribosyl)acetamidine + ATP = 5-amino-1-(5-phospho-beta-D-ribosyl)imidazole + ADP + phosphate + H(+). It participates in purine metabolism; IMP biosynthesis via de novo pathway; 5-amino-1-(5-phospho-D-ribosyl)imidazole from N(2)-formyl-N(1)-(5-phospho-D-ribosyl)glycinamide: step 2/2. In Pyrococcus furiosus (strain ATCC 43587 / DSM 3638 / JCM 8422 / Vc1), this protein is Phosphoribosylformylglycinamidine cyclo-ligase.